Here is a 422-residue protein sequence, read N- to C-terminus: MTYRDFIGRLKENGKLVEIQQPVSPIFEASRIAKKTKGPVLFHNVSGSKVIMNLLGSRDELSSMLGVPKEEIIKKLSEVSPEGEVRLVPGSPTLEVIESEVDLTKLPILTHFEKDGAPYITAGIVVSEYEGVMNASIHRLMLVGKDKLAARLVPPRHTYLLHKKAAEKGETLPVAIVLGCDPTIIYATSTRVPAGKEFEYAAALRGTPVEVFECSNGIKVPHSEIILEGYIDTKERVDEGPFVDITGTYDMVRKEPVIHITRIIHRKDPIYHGILPAGPEHLLMMGVPYEPRIYRAVGEVTTVKNVVLTEGGCCYLHAVVQIEKQTEGDAKNAIMAAFAAHTSLKHVVVVDEDINIFDPNDVEFAIATRVKGDMDILTITNVRGSSLDPRGASDGTTTKVGIDATKVLIEKENFERAIIPEE.

Residues Asn134 and Glu197 each coordinate Mn(2+). Asp244 functions as the Proton acceptor in the catalytic mechanism.

Belongs to the UbiD family. The cofactor is prenylated FMN. Requires Mn(2+) as cofactor.

The enzyme catalyses (2E)-3-methyl-5-phosphooxypent-2-enoate + H(+) = isopentenyl phosphate + CO2. Its pathway is isoprenoid biosynthesis; isopentenyl diphosphate biosynthesis via mevalonate pathway. Catalyzes the conversion of trans-anhydromevalonate 5-phosphate (tAHMP) into isopentenyl phosphate. Involved in the archaeal mevalonate (MVA) pathway, which provides fundamental precursors for isoprenoid biosynthesis, such as isopentenyl diphosphate (IPP) and dimethylallyl diphosphate (DMAPP). The polypeptide is Anhydromevalonate phosphate decarboxylase (Methanosarcina mazei (strain ATCC BAA-159 / DSM 3647 / Goe1 / Go1 / JCM 11833 / OCM 88) (Methanosarcina frisia)).